Reading from the N-terminus, the 124-residue chain is Ribonuclease pancreatic (124 aa).

Lys7 and Arg10 together coordinate substrate. His12 (proton acceptor) is an active-site residue. Intrachain disulfides connect Cys26–Cys84, Cys40–Cys95, Cys58–Cys110, and Cys65–Cys72. A glycan (N-linked (GlcNAc...) asparagine; partial) is linked at Asn34. Substrate contacts are provided by residues 41–45 (KPVBT), Lys66, and Arg85. His119 serves as the catalytic Proton donor.

This sequence belongs to the pancreatic ribonuclease family. Monomer. Interacts with and forms tight 1:1 complexes with RNH1. Dimerization of two such complexes may occur. Interaction with RNH1 inhibits this protein. In terms of tissue distribution, pancreas.

The protein resides in the secreted. It carries out the reaction an [RNA] containing cytidine + H2O = an [RNA]-3'-cytidine-3'-phosphate + a 5'-hydroxy-ribonucleotide-3'-[RNA].. It catalyses the reaction an [RNA] containing uridine + H2O = an [RNA]-3'-uridine-3'-phosphate + a 5'-hydroxy-ribonucleotide-3'-[RNA].. Functionally, endonuclease that catalyzes the cleavage of RNA on the 3' side of pyrimidine nucleotides. Acts on single-stranded and double-stranded RNA. In Damaliscus korrigum (Topi), this protein is Ribonuclease pancreatic (RNASE1).